We begin with the raw amino-acid sequence, 378 residues long: tRNA-specific 2-thiouridylase MnmA (378 aa).

ATP contacts are provided by residues 9–16 (GVSGGVDS) and methionine 35. Positions 94-96 (NPD) are interaction with target base in tRNA. Catalysis depends on cysteine 99, which acts as the Nucleophile. An intrachain disulfide couples cysteine 99 to cysteine 195. Glycine 123 serves as a coordination point for ATP. The segment at 145–147 (KDQ) is interaction with tRNA. Residue cysteine 195 is the Cysteine persulfide intermediate of the active site. Residues 307-308 (RY) form an interaction with tRNA region.

The protein belongs to the MnmA/TRMU family.

It localises to the cytoplasm. It carries out the reaction S-sulfanyl-L-cysteinyl-[protein] + uridine(34) in tRNA + AH2 + ATP = 2-thiouridine(34) in tRNA + L-cysteinyl-[protein] + A + AMP + diphosphate + H(+). Catalyzes the 2-thiolation of uridine at the wobble position (U34) of tRNA, leading to the formation of s(2)U34. The chain is tRNA-specific 2-thiouridylase MnmA from Xanthomonas axonopodis pv. citri (strain 306).